An 819-amino-acid chain; its full sequence is Deubiquitinase MYSM1 (819 aa).

Acidic residues predominate over residues 1–12 (MEAEEADVDVEG). The tract at residues 1-29 (MEAEEADVDVEGDVAAAAQPGNDESTASV) is disordered. Serine 107 is subject to Phosphoserine. The SANT domain occupies 113–164 (SHSVKWTVEEKELFEQGLAKFGRRWTKIATLLKSRTVLQVKSYARQYFKNKV). A Glycyl lysine isopeptide (Lys-Gly) (interchain with G-Cter in SUMO2) cross-link involves residue lysine 184. Serine 215 carries the phosphoserine modification. Disordered regions lie at residues 228–247 (ELTSQTSQNSGSHLTLDVPN), 260–279 (QEGPLAKSSGESLQNVKQGE), and 318–347 (LHRGEVREEAKHSPSPEPCERQDSSGNEML). Positions 230–240 (TSQTSQNSGSH) are enriched in polar residues. Phosphothreonine is present on threonine 233. The segment covering 318 to 340 (LHRGEVREEAKHSPSPEPCERQD) has biased composition (basic and acidic residues). At serine 332 the chain carries Phosphoserine. The SWIRM domain maps to 363–461 (LKPPEQEVEI…FGCEQAVYNR (99 aa)). One can recognise an MPN domain in the interval 568 to 700 (VKVAAEALLI…PLPYSQITCL (133 aa)). Positions 647, 649, and 660 each coordinate Zn(2+). The short motif at 647-660 (HSHPAFDPNPSLRD) is the JAMM motif element. Positions 765–769 (LQKLL) match the LXXLL motif motif.

It belongs to the peptidase M67A family. MYSM1 subfamily. As to quaternary structure, component of a large chromatin remodeling complex, at least composed of MYSM1, PCAF, RBM10 and KIF11/TRIP5. Binds histones.

The protein localises to the nucleus. The protein resides in the cytoplasm. Functionally, metalloprotease with deubiquitinase activity that plays important regulator roles in hematopoietic stem cell function, blood cell production and immune response. Participates in the normal programming of B-cell responses to antigen after the maturation process. Within the cytoplasm, plays critical roles in the repression of innate immunity and autoimmunity. Removes 'Lys-63'-linked polyubiquitins from TRAF3 and TRAF6 complexes. Attenuates NOD2-mediated inflammation and tissue injury by promoting 'Lys-63'-linked deubiquitination of RIPK2 component. Suppresses the CGAS-STING1 signaling pathway by cleaving STING1 'Lys-63'-linked ubiquitin chains. In the nucleus, acts as a hematopoietic transcription regulator derepressing a range of genes essential for normal stem cell differentiation including EBF1 and PAX5 in B-cells, ID2 in NK-cell progenitor or FLT3 in dendritic cell precursors. Deubiquitinates monoubiquitinated histone H2A, a specific tag for epigenetic transcriptional repression, leading to dissociation of histone H1 from the nucleosome. This Mus musculus (Mouse) protein is Deubiquitinase MYSM1 (Mysm1).